A 192-amino-acid polypeptide reads, in one-letter code: Fanconi anemia core complex-associated protein 20 (192 aa).

Over residues 1 to 16 (MEATRRSRLSLSRRRP) the composition is skewed to basic residues. Disordered stretches follow at residues 1–34 (MEATRRSRLSLSRRRPPLGVRPRSNTAGSLPDGG) and 51–151 (LNVD…SSVD). Basic and acidic residues predominate over residues 66–76 (QEPRRSPERPP). A phosphoserine mark is found at S119 and S149. The span at 132 to 149 (PSAEEQPSEEQPSQRQSS) shows a compositional bias: low complexity. Residues 156-192 (LQSCPMCQVDFAPGLAQLDIDGHLAQCLADSTDDIEW) form a UBZ2-type zinc finger. Residues C159, C162, H178, and C182 each coordinate Zn(2+).

Component of the Fanconi anemia (FA) complex. Interacts with FANCA; interaction is direct. Interacts with REV1.

Its subcellular location is the nucleus. The protein localises to the chromosome. In terms of biological role, component of the Fanconi anemia (FA) complex required to recruit the FA complex to DNA interstrand cross-links (ICLs) and promote ICLs repair. Following DNA damage recognizes and binds 'Lys-63'-linked ubiquitin generated by RNF8 at ICLs and recruits other components of the FA complex. Promotes translesion synthesis via interaction with REV1. The polypeptide is Fanconi anemia core complex-associated protein 20 (Bos taurus (Bovine)).